We begin with the raw amino-acid sequence, 310 residues long: Small ribosomal subunit biogenesis GTPase RsgA (310 aa).

The 160-residue stretch at Lys-77 to Leu-236 folds into the CP-type G domain. Residues Ser-126 to Asp-129 and Gly-179 to Thr-187 contribute to the GTP site. Zn(2+) is bound by residues Cys-260, Cys-266, His-268, and Cys-274.

It belongs to the TRAFAC class YlqF/YawG GTPase family. RsgA subfamily. Monomer. Associates with 30S ribosomal subunit, binds 16S rRNA. The cofactor is Zn(2+).

It is found in the cytoplasm. Its function is as follows. One of several proteins that assist in the late maturation steps of the functional core of the 30S ribosomal subunit. Helps release RbfA from mature subunits. May play a role in the assembly of ribosomal proteins into the subunit. Circularly permuted GTPase that catalyzes slow GTP hydrolysis, GTPase activity is stimulated by the 30S ribosomal subunit. The polypeptide is Small ribosomal subunit biogenesis GTPase RsgA (Phytoplasma australiense).